The chain runs to 365 residues: Eukaryotic translation initiation factor 3 subunit H (365 aa).

Residues 11–160 enclose the MPN domain; it reads VKVEALVVMK…LRAFRLSPKF (150 aa).

It belongs to the eIF-3 subunit H family. Component of the eukaryotic translation initiation factor 3 (eIF-3) complex.

It localises to the cytoplasm. Functionally, component of the eukaryotic translation initiation factor 3 (eIF-3) complex, which is involved in protein synthesis of a specialized repertoire of mRNAs and, together with other initiation factors, stimulates binding of mRNA and methionyl-tRNAi to the 40S ribosome. The eIF-3 complex specifically targets and initiates translation of a subset of mRNAs involved in cell proliferation. This is Eukaryotic translation initiation factor 3 subunit H from Aspergillus clavatus (strain ATCC 1007 / CBS 513.65 / DSM 816 / NCTC 3887 / NRRL 1 / QM 1276 / 107).